The primary structure comprises 109 residues: uncharacterized protein (109 aa).

3 helical membrane passes run Tyr16–Leu36, Thr54–Leu74, and Phe80–Met100.

Its subcellular location is the membrane. This is an uncharacterized protein from Schizosaccharomyces pombe (strain 972 / ATCC 24843) (Fission yeast).